We begin with the raw amino-acid sequence, 103 residues long: Putative membrane protein insertion efficiency factor (103 aa).

Belongs to the UPF0161 family.

Its subcellular location is the cell inner membrane. Functionally, could be involved in insertion of integral membrane proteins into the membrane. This is Putative membrane protein insertion efficiency factor from Chlamydia caviae (strain ATCC VR-813 / DSM 19441 / 03DC25 / GPIC) (Chlamydophila caviae).